A 160-amino-acid polypeptide reads, in one-letter code: uncharacterized protein (160 aa).

The stretch at 69-145 (NQLLNMMAQA…EQREHVKEQR (77 aa)) forms a coiled coil. Disordered stretches follow at residues 82-109 (GVRL…LKNA) and 129-160 (KKKQ…HRGK). The segment covering 86–99 (QGRRQKKINPKRLQ) has biased composition (basic residues). The segment covering 133-146 (IMKEQREHVKEQRY) has biased composition (basic and acidic residues). Over residues 147 to 160 (MLKKQKAKKKHRGK) the composition is skewed to basic residues.

This is an uncharacterized protein from Bacillus subtilis (strain 168).